A 237-amino-acid polypeptide reads, in one-letter code: Lectin (237 aa).

Asparagine 69 is a glycosylation site (N-linked (GlcNAc...) asparagine). Isoleucine 106 bears the Blocked amino end (Ile) mark. Glutamate 115 and aspartate 117 together coordinate Mn(2+). Ca(2+) is bound by residues aspartate 117, tyrosine 120, asparagine 122, and aspartate 127. Aspartate 127 and histidine 132 together coordinate Mn(2+).

This sequence belongs to the leguminous lectin family. In terms of assembly, tetramer of two alpha and two beta chains. In terms of processing, the N-terminus of alpha chain is blocked. The alpha and beta chains are produced by proteolytic processing, with probably the loss of intervening amino acid(s).

In terms of biological role, D-mannose/D-glucose-binding lectin. Requires Ca(2+) and Mn(2+) ions for full activity. This Lablab purpureus (Hyacinth bean) protein is Lectin.